A 263-amino-acid chain; its full sequence is Hydroxyethylthiazole kinase 2 (263 aa).

A substrate-binding site is contributed by Met-42. Positions 118 and 164 each coordinate ATP. Gly-191 provides a ligand contact to substrate.

The protein belongs to the Thz kinase family. It depends on Mg(2+) as a cofactor.

The enzyme catalyses 5-(2-hydroxyethyl)-4-methylthiazole + ATP = 4-methyl-5-(2-phosphooxyethyl)-thiazole + ADP + H(+). It functions in the pathway cofactor biosynthesis; thiamine diphosphate biosynthesis; 4-methyl-5-(2-phosphoethyl)-thiazole from 5-(2-hydroxyethyl)-4-methylthiazole: step 1/1. Catalyzes the phosphorylation of the hydroxyl group of 4-methyl-5-beta-hydroxyethylthiazole (THZ). This is Hydroxyethylthiazole kinase 2 from Clostridium botulinum (strain Loch Maree / Type A3).